The primary structure comprises 357 residues: Alanine racemase (357 aa).

Residue Lys35 is the Proton acceptor; specific for D-alanine of the active site. Lys35 carries the post-translational modification N6-(pyridoxal phosphate)lysine. Arg128 is a substrate binding site. The active-site Proton acceptor; specific for L-alanine is the Tyr254. Residue Met302 participates in substrate binding.

The protein belongs to the alanine racemase family. The cofactor is pyridoxal 5'-phosphate.

The enzyme catalyses L-alanine = D-alanine. It functions in the pathway amino-acid biosynthesis; D-alanine biosynthesis; D-alanine from L-alanine: step 1/1. Its function is as follows. Catalyzes the interconversion of L-alanine and D-alanine. May also act on other amino acids. The protein is Alanine racemase (alr) of Marinobacter nauticus (strain ATCC 700491 / DSM 11845 / VT8) (Marinobacter aquaeolei).